A 434-amino-acid polypeptide reads, in one-letter code: Histidinol dehydrogenase (434 aa).

Y130, Q188, and N211 together coordinate NAD(+). Residues S237, Q259, and H262 each contribute to the substrate site. Zn(2+) is bound by residues Q259 and H262. Active-site proton acceptor residues include E326 and H327. Residues H327, D360, E414, and H419 each coordinate substrate. D360 contacts Zn(2+). H419 lines the Zn(2+) pocket.

The protein belongs to the histidinol dehydrogenase family. Homodimer. Requires Zn(2+) as cofactor.

The enzyme catalyses L-histidinol + 2 NAD(+) + H2O = L-histidine + 2 NADH + 3 H(+). It participates in amino-acid biosynthesis; L-histidine biosynthesis; L-histidine from 5-phospho-alpha-D-ribose 1-diphosphate: step 9/9. Catalyzes the sequential NAD-dependent oxidations of L-histidinol to L-histidinaldehyde and then to L-histidine. This Shigella flexneri protein is Histidinol dehydrogenase.